The primary structure comprises 696 residues: DNA ligase (696 aa).

NAD(+) is bound by residues 43–47 (DGEFD), 92–93 (SL), and glutamate 122. Lysine 124 functions as the N6-AMP-lysine intermediate in the catalytic mechanism. Arginine 145, glutamate 185, lysine 301, and lysine 325 together coordinate NAD(+). Residues cysteine 419, cysteine 422, cysteine 438, and cysteine 444 each coordinate Zn(2+). Residues 608 to 696 (SIPRNLEGLS…GPDAVAESGV (89 aa)) form the BRCT domain.

This sequence belongs to the NAD-dependent DNA ligase family. LigA subfamily. Mg(2+) serves as cofactor. Requires Mn(2+) as cofactor.

The catalysed reaction is NAD(+) + (deoxyribonucleotide)n-3'-hydroxyl + 5'-phospho-(deoxyribonucleotide)m = (deoxyribonucleotide)n+m + AMP + beta-nicotinamide D-nucleotide.. In terms of biological role, DNA ligase that catalyzes the formation of phosphodiester linkages between 5'-phosphoryl and 3'-hydroxyl groups in double-stranded DNA using NAD as a coenzyme and as the energy source for the reaction. It is essential for DNA replication and repair of damaged DNA. The protein is DNA ligase of Rhodococcus jostii (strain RHA1).